A 65-amino-acid polypeptide reads, in one-letter code: Large ribosomal subunit protein bL35 (65 aa).

Residues methionine 1 to serine 47 form a disordered region. Basic residues predominate over residues alanine 10 to arginine 24. Residues serine 26 to serine 35 are compositionally biased toward polar residues.

Belongs to the bacterial ribosomal protein bL35 family.

The chain is Large ribosomal subunit protein bL35 from Geobacter metallireducens (strain ATCC 53774 / DSM 7210 / GS-15).